Reading from the N-terminus, the 540-residue chain is Chaperonin GroEL (540 aa).

Residues Thr29–Pro32, Asp86–Thr90, Gly413, Asn476–Ala478, and Asp492 contribute to the ATP site.

This sequence belongs to the chaperonin (HSP60) family. In terms of assembly, forms a cylinder of 14 subunits composed of two heptameric rings stacked back-to-back. Interacts with the co-chaperonin GroES.

It localises to the cytoplasm. The catalysed reaction is ATP + H2O + a folded polypeptide = ADP + phosphate + an unfolded polypeptide.. Together with its co-chaperonin GroES, plays an essential role in assisting protein folding. The GroEL-GroES system forms a nano-cage that allows encapsulation of the non-native substrate proteins and provides a physical environment optimized to promote and accelerate protein folding. This is Chaperonin GroEL from Streptococcus anginosus.